We begin with the raw amino-acid sequence, 181 residues long: Oligoribonuclease (181 aa).

Positions 8 to 171 (LIWIDLEMTG…QDIQESIAEL (164 aa)) constitute an Exonuclease domain. Tyrosine 129 is an active-site residue.

The protein belongs to the oligoribonuclease family.

Its subcellular location is the cytoplasm. 3'-to-5' exoribonuclease specific for small oligoribonucleotides. The protein is Oligoribonuclease of Shewanella oneidensis (strain ATCC 700550 / JCM 31522 / CIP 106686 / LMG 19005 / NCIMB 14063 / MR-1).